We begin with the raw amino-acid sequence, 41 residues long: Large ribosomal subunit protein bL36 (41 aa).

This sequence belongs to the bacterial ribosomal protein bL36 family.

This chain is Large ribosomal subunit protein bL36, found in Hyphomonas neptunium (strain ATCC 15444).